The primary structure comprises 1740 residues: SH3 and multiple ankyrin repeat domains protein 3 (1740 aa).

The tract at residues Met-1–Gln-75 is intramolecular interaction with the ANK repeats. Tyr-122 is subject to Phosphotyrosine. ANK repeat units follow at residues Ser-148 to Arg-181, Asp-182 to Ser-214, Arg-215 to Thr-245, Asn-249 to Ala-278, Ser-282 to Val-311, and Asn-315 to Pro-345. Positions Lys-354–Leu-466 are disordered. Phosphoserine occurs at positions 373, 375, 387, and 394. Over residues Leu-404–Glu-415 the composition is skewed to basic and acidic residues. A compositionally biased stretch (pro residues) spans Ala-444 to Arg-460. In terms of domain architecture, SH3 spans Val-470–Met-529. Ser-482 is modified (phosphoserine). At Tyr-555 the chain carries Phosphotyrosine. Residues Val-570–Thr-664 form the PDZ domain. The segment at Thr-664 to Thr-687 is disordered. A required for interaction with ABI1 region spans residues Pro-677–Pro-684. Phosphoserine occurs at positions 694, 781, 790, and 801. Disordered regions lie at residues Arg-759–Phe-855, Ala-868–Arg-1053, Ala-1115–Ser-1199, Leu-1211–Arg-1463, and Gly-1476–Gly-1518. Residues Ile-812–Gly-845 show a composition bias toward pro residues. Ser-891 and Ser-898 each carry phosphoserine. Thr-913 is modified (phosphothreonine). Residue Tyr-931 is modified to Phosphotyrosine. Residue Arg-966 is modified to Asymmetric dimethylarginine. Positions Val-1017–Arg-1027 are enriched in basic and acidic residues. Residues Ser-1123 to Pro-1132 are compositionally biased toward polar residues. Residue Thr-1131 is modified to Phosphothreonine. Phosphoserine occurs at positions 1135, 1160, 1164, and 1167. Residues Ala-1175–Ser-1195 are compositionally biased toward basic and acidic residues. Position 1235 is a phosphothreonine (Thr-1235). 2 stretches are compositionally biased toward pro residues: residues Met-1252–Ser-1262 and Thr-1322–Val-1334. At Ser-1254 the chain carries Phosphoserine. A compositionally biased stretch (low complexity) spans Pro-1335–Ser-1344. Basic and acidic residues predominate over residues Ala-1361–Leu-1371. Residues Glu-1372 to Leu-1393 are compositionally biased toward low complexity. An SH3-binding motif is present at residues Pro-1411–Pro-1417. The residue at position 1421 (Ser-1421) is a Phosphoserine. Positions Ile-1495–Glu-1515 form a coiled coil. A compositionally biased stretch (polar residues) spans Ser-1496 to Asn-1506. Ser-1511, Ser-1522, Ser-1530, and Ser-1549 each carry phosphoserine. Disordered stretches follow at residues Ile-1556–Leu-1594 and Val-1637–Pro-1673. Positions Val-1637–Pro-1647 are enriched in low complexity. A phosphoserine mark is found at Ser-1644, Ser-1646, and Ser-1648. Residues Ser-1648–Gly-1658 are compositionally biased toward pro residues. Positions Ser-1659–Pro-1668 are enriched in low complexity. An SAM domain is found at Trp-1677–Ser-1740.

The protein belongs to the SHANK family. May homomultimerize via its SAM domain. Interacts with BAIAP2, DBNL and SLC17A7/VGLUT1. Interacts with DLGAP1/GKAP, GRM1/MGLUR1, GRM5/MGLUR5 and LZTS3 C-termini via its PDZ domain. Interacts with ABI1, HOMER1, HOMER2, HOMER3 and CTTN/cortactin SH3 domain. Is part of a complex with DLG4/PSD-95 and DLGAP1/GKAP. Interacts (via PDZ domain) with the GRIA1 subunit of the AMPA receptor (via PDZ-binding motif). Interacts with WASF1 and CYFIP2; the interactions mediate the association of SHANK3 with the WAVE1 complex. Interacts with ARPC2; the interaction probably mediates the association of SHANK3 with the Arp2/3 complex. Interacts (via ANK repeats) with SHARPIN and SPTAN1. Interacts (via PDZ domain) with ARHGAP44 (probably via PDZ-binding motif); the interaction takes place in dendritic spines and promotes GRIA1 exocytosis. Interacts with CAMK2A. Interacts with DIP2A. Interacts with ADGRL3. In terms of tissue distribution, widely expressed in brain (at protein level).

It is found in the cytoplasm. The protein localises to the postsynaptic density. It localises to the cell projection. Its subcellular location is the dendritic spine. Its function is as follows. Major scaffold postsynaptic density protein which interacts with multiple proteins and complexes to orchestrate the dendritic spine and synapse formation, maturation and maintenance. Interconnects receptors of the postsynaptic membrane including NMDA-type and metabotropic glutamate receptors via complexes with GKAP/PSD-95 and HOMER, respectively, and the actin-based cytoskeleton. Plays a role in the structural and functional organization of the dendritic spine and synaptic junction through the interaction with Arp2/3 and WAVE1 complex as well as the promotion of the F-actin clusters. By way of this control of actin dynamics, participates in the regulation of developing neurons growth cone motility and the NMDA receptor-signaling. Also modulates GRIA1 exocytosis and GRM5/MGLUR5 expression and signaling to control the AMPA and metabotropic glutamate receptor-mediated synaptic transmission and plasticity. May be required at an early stage of synapse formation and be inhibited by IGF1 to promote synapse maturation. This chain is SH3 and multiple ankyrin repeat domains protein 3 (Shank3), found in Rattus norvegicus (Rat).